We begin with the raw amino-acid sequence, 483 residues long: Regulatory protein ViaA (483 aa).

The protein belongs to the ViaA family. As to quaternary structure, homodimer. Interacts with RavA.

It localises to the cytoplasm. Its function is as follows. Component of the RavA-ViaA chaperone complex, which may act on the membrane to optimize the function of some of the respiratory chains. ViaA stimulates the ATPase activity of RavA. This is Regulatory protein ViaA from Escherichia coli O1:K1 / APEC.